A 191-amino-acid chain; its full sequence is Large ribosomal subunit protein uL6A (191 aa).

This sequence belongs to the universal ribosomal protein uL6 family. As to quaternary structure, component of the large ribosomal subunit (LSU). Mature yeast ribosomes consist of a small (40S) and a large (60S) subunit. The 40S small subunit contains 1 molecule of ribosomal RNA (18S rRNA) and 33 different proteins (encoded by 57 genes). The large 60S subunit contains 3 rRNA molecules (25S, 5.8S and 5S rRNA) and 46 different proteins (encoded by 81 genes). uL6 lines the binding pocket for eukaryotic elongation factor 2 (eEF2).

The protein resides in the cytoplasm. In terms of biological role, component of the ribosome, a large ribonucleoprotein complex responsible for the synthesis of proteins in the cell. The small ribosomal subunit (SSU) binds messenger RNAs (mRNAs) and translates the encoded message by selecting cognate aminoacyl-transfer RNA (tRNA) molecules. The large subunit (LSU) contains the ribosomal catalytic site termed the peptidyl transferase center (PTC), which catalyzes the formation of peptide bonds, thereby polymerizing the amino acids delivered by tRNAs into a polypeptide chain. The nascent polypeptides leave the ribosome through a tunnel in the LSU and interact with protein factors that function in enzymatic processing, targeting, and the membrane insertion of nascent chains at the exit of the ribosomal tunnel. The chain is Large ribosomal subunit protein uL6A from Saccharomyces cerevisiae (strain ATCC 204508 / S288c) (Baker's yeast).